A 183-amino-acid polypeptide reads, in one-letter code: Bifunctional protein PyrR (183 aa).

The PRPP-binding signature appears at 102–114; that stretch reads VVLVDDVLYTGRT.

It belongs to the purine/pyrimidine phosphoribosyltransferase family. PyrR subfamily. Homodimer and homohexamer; in equilibrium.

The enzyme catalyses UMP + diphosphate = 5-phospho-alpha-D-ribose 1-diphosphate + uracil. Regulates transcriptional attenuation of the pyrimidine nucleotide (pyr) operon by binding in a uridine-dependent manner to specific sites on pyr mRNA. This disrupts an antiterminator hairpin in the RNA and favors formation of a downstream transcription terminator, leading to a reduced expression of downstream genes. In terms of biological role, also displays a weak uracil phosphoribosyltransferase activity which is not physiologically significant. This is Bifunctional protein PyrR from Listeria monocytogenes serotype 4a (strain HCC23).